The primary structure comprises 132 residues: Acyl-CoA thioester hydrolase YciA (132 aa).

One can recognise a HotDog ACOT-type domain in the interval 8 to 123 (PQGDLVLRTL…LFKYVAVDPE (116 aa)).

The protein belongs to the acyl coenzyme A hydrolase family.

Its function is as follows. Catalyzes the hydrolysis of the thioester bond in palmitoyl-CoA and malonyl-CoA. In Escherichia coli O6:H1 (strain CFT073 / ATCC 700928 / UPEC), this protein is Acyl-CoA thioester hydrolase YciA (yciA).